A 159-amino-acid chain; its full sequence is Phosphopantetheine adenylyltransferase (159 aa).

Residue His-16 coordinates ATP. 3 residues coordinate substrate: Lys-40, Met-72, and Arg-86. Residues 87–89 (GLR), Glu-97, and 122–128 (YQYLSAS) contribute to the ATP site.

The protein belongs to the bacterial CoaD family. In terms of assembly, homohexamer. The cofactor is Mg(2+).

The protein resides in the cytoplasm. The catalysed reaction is (R)-4'-phosphopantetheine + ATP + H(+) = 3'-dephospho-CoA + diphosphate. The protein operates within cofactor biosynthesis; coenzyme A biosynthesis; CoA from (R)-pantothenate: step 4/5. Functionally, reversibly transfers an adenylyl group from ATP to 4'-phosphopantetheine, yielding dephospho-CoA (dPCoA) and pyrophosphate. This is Phosphopantetheine adenylyltransferase from Dehalococcoides mccartyi (strain ATCC BAA-2266 / KCTC 15142 / 195) (Dehalococcoides ethenogenes (strain 195)).